Here is a 166-residue protein sequence, read N- to C-terminus: Protein BioX (166 aa).

The next 5 helical transmembrane spans lie at 12–32 (ISLLACLIIVTGMFKIPTGIP), 33–53 (GSEFQLSAPIAVAIAAVFGFK), 55–75 (YFLAGIIASLILFLLGIHSIL), 87–107 (VGLIIVLLGTSIPVLVVAGPI), and 117–137 (AFTLGTPFLPLFVLAIPGMVI).

Its subcellular location is the cell membrane. Functionally, does not seem to be a permease of pimelate. Its role in biotin synthesis is not clear. The polypeptide is Protein BioX (bioX) (Lysinibacillus sphaericus (Bacillus sphaericus)).